We begin with the raw amino-acid sequence, 428 residues long: Enolase (428 aa).

Residue Gln163 participates in (2R)-2-phosphoglycerate binding. Glu205 functions as the Proton donor in the catalytic mechanism. Residues Asp242, Glu286, and Asp313 each coordinate Mg(2+). (2R)-2-phosphoglycerate-binding residues include Lys338, Arg367, Ser368, and Lys389. Lys338 (proton acceptor) is an active-site residue.

Belongs to the enolase family. Mg(2+) serves as cofactor.

It localises to the cytoplasm. It is found in the secreted. Its subcellular location is the cell surface. The enzyme catalyses (2R)-2-phosphoglycerate = phosphoenolpyruvate + H2O. It functions in the pathway carbohydrate degradation; glycolysis; pyruvate from D-glyceraldehyde 3-phosphate: step 4/5. Functionally, catalyzes the reversible conversion of 2-phosphoglycerate (2-PG) into phosphoenolpyruvate (PEP). It is essential for the degradation of carbohydrates via glycolysis. This Syntrophus aciditrophicus (strain SB) protein is Enolase.